A 537-amino-acid polypeptide reads, in one-letter code: Chaperonin GroEL (537 aa).

Residues Thr30–Pro33, Asp87–Thr91, Gly414, Asp477–Val479, and Asp493 contribute to the ATP site.

The protein belongs to the chaperonin (HSP60) family. As to quaternary structure, forms a cylinder of 14 subunits composed of two heptameric rings stacked back-to-back. Interacts with the co-chaperonin GroES.

It is found in the cytoplasm. It catalyses the reaction ATP + H2O + a folded polypeptide = ADP + phosphate + an unfolded polypeptide.. Functionally, together with its co-chaperonin GroES, plays an essential role in assisting protein folding. The GroEL-GroES system forms a nano-cage that allows encapsulation of the non-native substrate proteins and provides a physical environment optimized to promote and accelerate protein folding. The chain is Chaperonin GroEL from Coprothermobacter proteolyticus (strain ATCC 35245 / DSM 5265 / OCM 4 / BT).